The chain runs to 626 residues: Hemocyanin AA6 chain (626 aa).

Cu cation-binding residues include histidine 170, histidine 174, histidine 201, histidine 321, histidine 325, and histidine 361. Phosphoserine is present on serine 374.

Belongs to the tyrosinase family. Hemocyanin subfamily. As to quaternary structure, scorpion hemocyanin is a 24-chain polymer with 8 different chains identified, assembled in hexameric substructures. Three disulfide bonds are present. In terms of tissue distribution, hemolymph.

It localises to the secreted. Its subcellular location is the extracellular space. Hemocyanins are copper-containing oxygen carriers occurring freely dissolved in the hemolymph of many mollusks and arthropods. The protein is Hemocyanin AA6 chain of Androctonus australis (Sahara scorpion).